A 459-amino-acid polypeptide reads, in one-letter code: Alpha-N-acetylgalactosaminidase (459 aa).

Positions 1-31 (MHNIHRRHFLKAAGAVTAGLVTANIALNANA) form a signal peptide, tat-type signal. NAD(+)-binding positions include 64-65 (ER), Asp86, 135-138 (WEWH), 155-156 (EV), and Asn184. Residues Tyr213, Arg232, 244-247 (YPTH), and Tyr326 contribute to the substrate site. Tyr244 lines the NAD(+) pocket.

This sequence belongs to the Gfo/Idh/MocA family. Glycosyl hydrolase 109 subfamily. Requires NAD(+) as cofactor. In terms of processing, predicted to be exported by the Tat system. The position of the signal peptide cleavage has not been experimentally proven.

The catalysed reaction is Cleavage of non-reducing alpha-(1-&gt;3)-N-acetylgalactosamine residues from human blood group A and AB mucin glycoproteins, Forssman hapten and blood group A lacto series glycolipids.. Glycosidase that has specific alpha-N-acetylgalactosaminidase activity. The chain is Alpha-N-acetylgalactosaminidase (nagA) from Shewanella oneidensis (strain ATCC 700550 / JCM 31522 / CIP 106686 / LMG 19005 / NCIMB 14063 / MR-1).